The sequence spans 461 residues: Photosystem II CP43 reaction center protein (461 aa).

The propeptide occupies 1 to 2 (ME). Position 3 is an N-acetylthreonine (T3). Residue T3 is modified to Phosphothreonine. Transmembrane regions (helical) follow at residues 57–81 (LFEV…PHLA), 122–143 (IIGP…KDKN), 166–188 (KAMF…RVIS), 243–263 (KPFS…LSYS), and 279–300 (WFNN…ASQA). E355 provides a ligand contact to [CaMn4O5] cluster. Residues 435–459 (RARAASGGFEKGLDRENEPVLSMKL) traverse the membrane as a helical segment.

The protein belongs to the PsbB/PsbC family. PsbC subfamily. In terms of assembly, PSII is composed of 1 copy each of membrane proteins PsbA, PsbB, PsbC, PsbD, PsbE, PsbF, PsbH, PsbI, PsbJ, PsbK, PsbL, PsbM, PsbT, PsbX, PsbY, PsbZ, Psb30/Ycf12, at least 3 peripheral proteins of the oxygen-evolving complex and a large number of cofactors. It forms dimeric complexes. Binds multiple chlorophylls and provides some of the ligands for the Ca-4Mn-5O cluster of the oxygen-evolving complex. It may also provide a ligand for a Cl- that is required for oxygen evolution. PSII binds additional chlorophylls, carotenoids and specific lipids. is required as a cofactor.

Its subcellular location is the plastid. The protein resides in the cyanelle thylakoid membrane. One of the components of the core complex of photosystem II (PSII). It binds chlorophyll and helps catalyze the primary light-induced photochemical processes of PSII. PSII is a light-driven water:plastoquinone oxidoreductase, using light energy to abstract electrons from H(2)O, generating O(2) and a proton gradient subsequently used for ATP formation. The polypeptide is Photosystem II CP43 reaction center protein (Cyanophora paradoxa).